Reading from the N-terminus, the 110-residue chain is UPF0122 protein SGO_1122 (110 aa).

The protein belongs to the UPF0122 family.

Functionally, might take part in the signal recognition particle (SRP) pathway. This is inferred from the conservation of its genetic proximity to ftsY/ffh. May be a regulatory protein. The polypeptide is UPF0122 protein SGO_1122 (Streptococcus gordonii (strain Challis / ATCC 35105 / BCRC 15272 / CH1 / DL1 / V288)).